Here is a 133-residue protein sequence, read N- to C-terminus: Ribosome-binding factor A (133 aa).

It belongs to the RbfA family. As to quaternary structure, monomer. Binds 30S ribosomal subunits, but not 50S ribosomal subunits or 70S ribosomes.

The protein localises to the cytoplasm. One of several proteins that assist in the late maturation steps of the functional core of the 30S ribosomal subunit. Associates with free 30S ribosomal subunits (but not with 30S subunits that are part of 70S ribosomes or polysomes). Required for efficient processing of 16S rRNA. May interact with the 5'-terminal helix region of 16S rRNA. The protein is Ribosome-binding factor A of Enterobacter sp. (strain 638).